The chain runs to 441 residues: Trigger factor (441 aa).

The PPIase FKBP-type domain occupies 161-246 (GDKVTIDFLG…VHEVLGEKLP (86 aa)).

This sequence belongs to the FKBP-type PPIase family. Tig subfamily.

It is found in the cytoplasm. It catalyses the reaction [protein]-peptidylproline (omega=180) = [protein]-peptidylproline (omega=0). Its function is as follows. Involved in protein export. Acts as a chaperone by maintaining the newly synthesized protein in an open conformation. Functions as a peptidyl-prolyl cis-trans isomerase. The chain is Trigger factor from Teredinibacter turnerae (strain ATCC 39867 / T7901).